The sequence spans 109 residues: Iron-sulfur cluster assembly protein CyaY (109 aa).

This sequence belongs to the frataxin family.

Involved in iron-sulfur (Fe-S) cluster assembly. May act as a regulator of Fe-S biogenesis. The sequence is that of Iron-sulfur cluster assembly protein CyaY from Bordetella petrii (strain ATCC BAA-461 / DSM 12804 / CCUG 43448).